The chain runs to 705 residues: Choline transporter-like protein 2 (705 aa).

The Cytoplasmic portion of the chain corresponds to 1–31; it reads MEDQRKYGAYGTPQKYDPTFKGPIYNRGCTD. Thr12 carries the phosphothreonine modification. Residues 32-52 traverse the membrane as a helical segment; sequence VLCCVLLFLAIVGYVAVGLIA. The Extracellular segment spans residues 53–231; the sequence is WTHGDPRKVI…RIFEDYTVSW (179 aa). N-linked (GlcNAc...) asparagine glycosylation is found at Asn186 and Asn199. A helical transmembrane segment spans residues 232 to 252; it reads YWIVIGLVIAMVLSLLFIILL. Topologically, residues 253 to 255 are cytoplasmic; that stretch reads RFL. The chain crosses the membrane as a helical span at residues 256 to 276; the sequence is AGIMVWVMIVLVILVLGYGIF. Topologically, residues 277–314 are extracellular; the sequence is HCYMEYARLRGEAGSDISVLDLGFQTDFRVYLHLRQTW. A helical transmembrane segment spans residues 315–335; it reads LAFMIILSILEVIIILLLIFL. At 336 to 363 the chain is on the cytoplasmic side; the sequence is RKRILIAIALIKEASRAVGYVMCSLLYP. The helical transmembrane segment at 364 to 384 threads the bilayer; that stretch reads LVTFFLLCLCIAYWASTAVFL. Over 385–455 the chain is Extracellular; the sequence is STSNEAVYKI…IFNAFMFFWL (71 aa). The N-linked (GlcNAc...) asparagine glycan is linked to Asn414. Residues 456–478 form a helical membrane-spanning segment; the sequence is ANFVLALGQVTLAGAFASYYWAL. Topologically, residues 479-503 are cytoplasmic; the sequence is RKPDDMPAFPLFAAFGRALRYHTGS. A helical transmembrane segment spans residues 504 to 524; sequence LAFGSLILAIVQIIRVILEYL. Topologically, residues 525-562 are extracellular; sequence DQRLKAAENKFAKFLMTCLKCCFWCLEKFIKFLNRNAY. A helical transmembrane segment spans residues 563 to 583; the sequence is IMIAIYGTNFCTSARNAFFLL. Residues 584-598 are Cytoplasmic-facing; it reads MRNIIRVAVLDKVTD. Residues 599-619 traverse the membrane as a helical segment; that stretch reads FLFLLGKLLIVGSVGILAFFF. The Extracellular segment spans residues 620-637; sequence FTHRIRIVQDTAPPLNYY. Residues 638–658 traverse the membrane as a helical segment; sequence WVPILTVIVGSYLIAHGFFSV. The Cytoplasmic portion of the chain corresponds to 659 to 705; that stretch reads YGMCVDTLFLCFLEDLERNNGSSERPYFMSSTLKKLLNKTNKKPVES.

This sequence belongs to the CTL (choline transporter-like) family. In terms of assembly, interacts with COCH. Post-translationally, N-glycosylated; contains sialic acid. Not O-glycosylated. In terms of tissue distribution, expressed at high levels in lung, colon and in supporting cells of the inner ear (at protein level). Progressively lower levels in brain, tongue, liver and kidney (at protein level). In the tongue, strongly expressed in epithelial cells and in nerves within the musculature. Within the nerves, expression observed in the perineurial cells of the nerve sheath, in the Schwann cells and myelinated nerve fibers (at protein level). In the kidney, prominent expression in glomeruli in the lining of Bowman's capsule and on the mesangial cells adjacent to the vessels within the glomerulus (at protein level). Strongly expressed on the membranes of splenocytes (at protein level).

It is found in the cell membrane. Its subcellular location is the mitochondrion outer membrane. The catalysed reaction is choline(out) + n H(+)(in) = choline(in) + n H(+)(out). The enzyme catalyses ethanolamine(out) + n H(+)(in) = ethanolamine(in) + n H(+)(out). Its function is as follows. Choline/H+ antiporter, mainly in mitochodria. Also acts as a low-affinity ethanolamine/H+ antiporter, regulating the supply of extracellular ethanolamine (Etn) for the CDP-Etn pathway, redistribute intracellular Etn and balance the CDP-Cho and CDP-Etn arms of the Kennedy pathway. This is Choline transporter-like protein 2 (SLC44A2) from Cavia porcellus (Guinea pig).